The primary structure comprises 436 residues: Enolase (436 aa).

A (2R)-2-phosphoglycerate-binding site is contributed by glutamine 167. The Proton donor role is filled by glutamate 209. Positions 246, 291, and 318 each coordinate Mg(2+). (2R)-2-phosphoglycerate is bound by residues lysine 343, arginine 372, serine 373, and lysine 394. The active-site Proton acceptor is the lysine 343.

This sequence belongs to the enolase family. Component of the RNA degradosome, a multiprotein complex involved in RNA processing and mRNA degradation. Mg(2+) is required as a cofactor.

It localises to the cytoplasm. Its subcellular location is the secreted. The protein localises to the cell surface. It carries out the reaction (2R)-2-phosphoglycerate = phosphoenolpyruvate + H2O. It participates in carbohydrate degradation; glycolysis; pyruvate from D-glyceraldehyde 3-phosphate: step 4/5. In terms of biological role, catalyzes the reversible conversion of 2-phosphoglycerate (2-PG) into phosphoenolpyruvate (PEP). It is essential for the degradation of carbohydrates via glycolysis. The polypeptide is Enolase (Glaesserella parasuis serovar 5 (strain SH0165) (Haemophilus parasuis)).